A 659-amino-acid polypeptide reads, in one-letter code: uncharacterized protein (659 aa).

16 helical membrane-spanning segments follow: residues 24–44, 71–91, 115–135, 157–177, 183–203, 214–234, 242–262, 279–299, 311–331, 365–385, 393–413, 433–453, 490–510, 517–537, 550–570, and 596–616; these read TTLM…YGLF, FGAS…VMMV, IGWL…DSGV, RAWI…RVII, FVLL…GNAG, AVIV…TAAL, AVLI…AELV, LGLV…WALV, LTAL…VQTA, FDSL…AGFV, TWPV…VFTS, MTLN…TLAL, FILF…DTLV, EFMA…IIGI, IGLL…LMTM, and IGGA…IVAL.

The protein to M.tuberculosis Rv0102.

The protein resides in the cell membrane. This is an uncharacterized protein from Mycobacterium leprae (strain TN).